We begin with the raw amino-acid sequence, 308 residues long: HTH-type transcriptional activator AllS (308 aa).

Residues 2–59 (FDPETLRTFIAVAETGSFSKAAERLCKTTATISYRIKLLEENTGVALFFRTTRSVTLT) form the HTH lysR-type domain. Residues 19 to 38 (FSKAAERLCKTTATISYRIK) constitute a DNA-binding region (H-T-H motif).

The protein belongs to the LysR transcriptional regulatory family.

Its function is as follows. Positive regulator essential for the expression of allD operon. Binds to the allD promoter. The protein is HTH-type transcriptional activator AllS (allS) of Escherichia coli O6:K15:H31 (strain 536 / UPEC).